We begin with the raw amino-acid sequence, 518 residues long: Sodium-dependent glucose transporter 1 (518 aa).

Helical transmembrane passes span 19 to 39 (TFQDLATNVNRNISSLSFIFV), 53 to 73 (GFLVDVMNYFLLLGISMSATT), 82 to 102 (CKTAILLTVMMSIFGVSIGIL), 107 to 127 (NVLILAIWGDKGAPHMQALHF), 139 to 159 (LAKLALGPTASAENHTESDFH), 221 to 241 (FRRAKYHNALLCLLFLFFFFY), 307 to 327 (TSSLFLVLFDKNPICLWIATS), 347 to 367 (YTTIHGKSAAFFVIGASLGEM), 376 to 396 (LQGKYPDLPVVLYTSLGASIA), 400 to 420 (LFPVLYKLATSPLDRQRKEDR), 438 to 458 (EEENEEEDAEKWNEMDFEMIE), and 466 to 486 (SIIETSRSSLTEPTAEVYNQY). Residues 414–426 (RQRKEDRKSEDQK) show a composition bias toward basic and acidic residues. Positions 414–448 (RQRKEDRKSEDQKALLSSSGLNEYEEENEEEDAEK) are disordered. The segment covering 436–448 (EYEEENEEEDAEK) has biased composition (acidic residues).

The protein belongs to the major facilitator superfamily.

Its subcellular location is the apical cell membrane. May function as a sodium-dependent glucose transporter. Potential channels for urea in the inner medulla of kidney. In Homo sapiens (Human), this protein is Sodium-dependent glucose transporter 1.